The primary structure comprises 188 residues: Single-stranded DNA-binding protein DdrB (188 aa).

Residues 140–188 (YAVPGGAAGNGQGRPAPQGQPAQARPQATAARPAARPPVQPGQEEETPF) form a disordered region. Positions 152-173 (GRPAPQGQPAQARPQATAARPA) are enriched in low complexity.

Homopentamer arranged in a ring-structure; DNA binds between subunits and along the top of the ring. The pentamers self-associate to coat ssDNA in higher-ordered structures; oligomerization facilitates the assembly of extended nucleoprotein complexes. Self-assembly does not however require ssDNA-binding. Interacts with SSB.

In terms of biological role, ssDNA-binding protein that contributes to the ionizing radiation resistance of D.radiodurans. Plays a role in DNA repair and genome reconstitution in a RecA-independent process. Required for recovery from severe genomic fragmentation as a result of exposure to severe levels of ionizing radiation. Binds ssDNA but not dsDNA. Stimulates annealing of complementary ssDNA. Does not complement an ssb disruption. The chain is Single-stranded DNA-binding protein DdrB (ddrB) from Deinococcus radiodurans (strain ATCC 13939 / DSM 20539 / JCM 16871 / CCUG 27074 / LMG 4051 / NBRC 15346 / NCIMB 9279 / VKM B-1422 / R1).